We begin with the raw amino-acid sequence, 262 residues long: Acetylglutamate kinase (262 aa).

Substrate contacts are provided by residues 46–47 (GG), R68, and N160.

The protein belongs to the acetylglutamate kinase family. ArgB subfamily.

It is found in the cytoplasm. It carries out the reaction N-acetyl-L-glutamate + ATP = N-acetyl-L-glutamyl 5-phosphate + ADP. It functions in the pathway amino-acid biosynthesis; L-arginine biosynthesis; N(2)-acetyl-L-ornithine from L-glutamate: step 2/4. In terms of biological role, catalyzes the ATP-dependent phosphorylation of N-acetyl-L-glutamate. The sequence is that of Acetylglutamate kinase from Shewanella amazonensis (strain ATCC BAA-1098 / SB2B).